The chain runs to 447 residues: UDP-N-acetylmuramate--L-alanine ligase (447 aa).

108–114 contributes to the ATP binding site; that stretch reads GSHGKTS.

It belongs to the MurCDEF family.

The protein resides in the cytoplasm. It catalyses the reaction UDP-N-acetyl-alpha-D-muramate + L-alanine + ATP = UDP-N-acetyl-alpha-D-muramoyl-L-alanine + ADP + phosphate + H(+). Its pathway is cell wall biogenesis; peptidoglycan biosynthesis. Its function is as follows. Cell wall formation. In Listeria monocytogenes serotype 4b (strain F2365), this protein is UDP-N-acetylmuramate--L-alanine ligase.